Consider the following 580-residue polypeptide: Viral transcription factor IE2 (580 aa).

Basic and acidic residues predominate over residues 1–11 (MESSAKRKMDP). Disordered stretches follow at residues 1–30 (MESS…TPVT) and 99–161 (DSSS…VIIK). The segment covering 99 to 133 (DSSSTGPTLTTHSCSVSSAPLNKPTPTSVAVTNTP) has biased composition (polar residues). Residues K175 and K180 each participate in a glycyl lysine isopeptide (Lys-Gly) (interchain with G-Cter in SUMO) cross-link. The SUMO-interacting motif 1/SIM1 motif lies at 199–202 (CIVI). Phosphoserine; by host CK2 occurs at positions 203 and 205. The segment at 206 to 335 (EEEQGEEVET…KSKRISELDN (130 aa)) is disordered. Low complexity-rich tracts occupy residues 216 to 236 (RGAT…TSPT), 259 to 271 (SSSS…SASD), and 302 to 317 (AASS…SSGG). The SUMO-interacting motif 1/SIM2 signature appears at 410-413 (IQII). An SUMO-interacting motif 1/SIM3 motif is present at residues 501 to 504 (VDLL).

The protein belongs to the HHV-5 IE2 protein family. As to quaternary structure, interacts with host SUMO-modified form of TATA-binding protein (TBP)-associated factor 12/TAF12 in a SIM-dependent manner; this interaction increases the transactivation activity of IE2. Interacts with host CHAF1A. Interacts with several components of the host transcriptional machinery including TBP, TF2B and CREB1. Interacts with host DNA replication licensing factor MCM3. Interacts with host PLSCR1; this interaction inhibits IE2 transactivating activity. In terms of processing, phosphorylated by host CK2 at Ser-203 and Ser-205; leading to enhanced SUMOylation. Post-translationally, SUMOylated; SUMOylation is enhanced when IE2 is phosphorylated by host CK2. The sumoylation is necessary for efficient replication of the virus and thus for the function of this viral transcription factor.

It localises to the host nucleus. Functionally, stimulates viral early and late gene expression and thus play a crucial role in the regulation of productive infection. Selectively drives host RNA Pol II transcription initiation at a subset of viral early-late and late promoters without substantially affecting Pol II transcription of expressed host genes. Mechanistically, forms a repressive complex at the major immediate-early promoter region involving direct association with host nucleosomes and TBP. Concerning activation, stimulates transcription by binding nearby, but not within, core promoter regions. In addition, activates quiescent cells to reenter the cell cycle and up-regulates several E2F-responsive genes, which are responsible for pushing the cell into S phase. In S-phase, inhibits cellular DNA synthesis and blocks further cell cycle progression. The protein is Viral transcription factor IE2 (UL122) of Human cytomegalovirus (strain AD169) (HHV-5).